The following is a 163-amino-acid chain: Lipoprotein signal peptidase (163 aa).

Helical transmembrane passes span 11–31 (ILIA…IATT), 63–83 (KMTF…YFFI), and 88–108 (YNLF…GNFI). Active-site residues include Asp-118 and Asp-136. A helical transmembrane segment spans residues 131-151 (IFNIADSSLTIGVILIIIALL).

The protein belongs to the peptidase A8 family.

The protein resides in the cell membrane. It carries out the reaction Release of signal peptides from bacterial membrane prolipoproteins. Hydrolyzes -Xaa-Yaa-Zaa-|-(S,diacylglyceryl)Cys-, in which Xaa is hydrophobic (preferably Leu), and Yaa (Ala or Ser) and Zaa (Gly or Ala) have small, neutral side chains.. The protein operates within protein modification; lipoprotein biosynthesis (signal peptide cleavage). This protein specifically catalyzes the removal of signal peptides from prolipoproteins. The polypeptide is Lipoprotein signal peptidase (Staphylococcus aureus (strain MRSA252)).